The primary structure comprises 1071 residues: ATP-dependent helicase/deoxyribonuclease subunit B (1071 aa).

The protein belongs to the helicase family. AddB/RexB type 2 subfamily. Heterodimer of AddA and RexB. Mg(2+) is required as a cofactor.

In terms of biological role, the heterodimer acts as both an ATP-dependent DNA helicase and an ATP-dependent, dual-direction single-stranded exonuclease. Recognizes the chi site generating a DNA molecule suitable for the initiation of homologous recombination. This subunit has 5' -&gt; 3' nuclease activity but not helicase activity. In Streptococcus pyogenes serotype M12 (strain MGAS2096), this protein is ATP-dependent helicase/deoxyribonuclease subunit B.